The chain runs to 224 residues: UPF0758 protein Hhal_2301 (224 aa).

An MPN domain is found at 102 to 224 (TLSSPAQTRT…PVSLAERGVL (123 aa)). Zn(2+) is bound by residues His-173, His-175, and Asp-186. The JAMM motif signature appears at 173–186 (HNHPSGITEPSAAD).

This sequence belongs to the UPF0758 family.

This is UPF0758 protein Hhal_2301 from Halorhodospira halophila (strain DSM 244 / SL1) (Ectothiorhodospira halophila (strain DSM 244 / SL1)).